The chain runs to 215 residues: Transmembrane emp24 domain-containing protein 11 (215 aa).

The signal sequence occupies residues 1 to 17 (MQIQTILLCFSFSFSAA). Over 18-167 (FYFHAGEREE…ILKEQDYQRD (150 aa)) the chain is Lumenal. The 99-residue stretch at 27–125 (EKCIIEDIPS…KLRIHLDIRV (99 aa)) folds into the GOLD domain. Residue Asn105 is glycosylated (N-linked (GlcNAc...) asparagine). Residues 136–171 (QAKDKVNEVTFKLQHLIEQVEQILKEQDYQRDREEN) are a coiled coil. A helical transmembrane segment spans residues 168 to 185 (REENFRITSEDTNRNVLW). The Cytoplasmic segment spans residues 186–215 (WAFAQILIFISVGIFQMKHLKDFFIAKKLV). A COPII vesicle coat-binding motif is present at residues 208–209 (FF). The COPI vesicle coat-binding signature appears at 208–215 (FFIAKKLV).

The protein belongs to the EMP24/GP25L family.

Its subcellular location is the endoplasmic reticulum membrane. Functionally, part of a complex whose function is to bind Ca(2+) to the ER membrane and thereby regulate the retention of ER resident proteins. The sequence is that of Transmembrane emp24 domain-containing protein 11 (Tmed11) from Mus musculus (Mouse).